A 506-amino-acid chain; its full sequence is D-alanine--D-alanyl carrier protein ligase (506 aa).

An ATP-binding site is contributed by 152–153 (TS). Asp197 contributes to the D-alanine binding site. 292 to 297 (NTYGPT) is an ATP binding site. Residue Val301 participates in D-alanine binding. ATP is bound by residues Asp383, 395–398 (YRGR), and Lys494. D-alanine is bound at residue Lys494.

This sequence belongs to the ATP-dependent AMP-binding enzyme family. DltA subfamily.

Its subcellular location is the cytoplasm. The catalysed reaction is holo-[D-alanyl-carrier protein] + D-alanine + ATP = D-alanyl-[D-alanyl-carrier protein] + AMP + diphosphate. It participates in cell wall biogenesis; lipoteichoic acid biosynthesis. In terms of biological role, catalyzes the first step in the D-alanylation of lipoteichoic acid (LTA), the activation of D-alanine and its transfer onto the D-alanyl carrier protein (Dcp) DltC. In an ATP-dependent two-step reaction, forms a high energy D-alanyl-AMP intermediate, followed by transfer of the D-alanyl residue as a thiol ester to the phosphopantheinyl prosthetic group of the Dcp. D-alanylation of LTA plays an important role in modulating the properties of the cell wall in Gram-positive bacteria, influencing the net charge of the cell wall. The polypeptide is D-alanine--D-alanyl carrier protein ligase (Lacticaseibacillus paracasei (strain ATCC 334 / BCRC 17002 / CCUG 31169 / CIP 107868 / KCTC 3260 / NRRL B-441) (Lactobacillus paracasei)).